The chain runs to 451 residues: Phosphoglucosamine mutase (451 aa).

Serine 103 (phosphoserine intermediate) is an active-site residue. Residues serine 103, aspartate 243, aspartate 245, and aspartate 247 each contribute to the Mg(2+) site. Serine 103 is subject to Phosphoserine.

It belongs to the phosphohexose mutase family. Mg(2+) serves as cofactor. Activated by phosphorylation.

The catalysed reaction is alpha-D-glucosamine 1-phosphate = D-glucosamine 6-phosphate. Catalyzes the conversion of glucosamine-6-phosphate to glucosamine-1-phosphate. This is Phosphoglucosamine mutase from Lactobacillus gasseri (strain ATCC 33323 / DSM 20243 / BCRC 14619 / CIP 102991 / JCM 1131 / KCTC 3163 / NCIMB 11718 / NCTC 13722 / AM63).